We begin with the raw amino-acid sequence, 133 residues long: Ribosome-binding factor A (133 aa).

This sequence belongs to the RbfA family. Monomer. Binds 30S ribosomal subunits, but not 50S ribosomal subunits or 70S ribosomes.

The protein localises to the cytoplasm. Its function is as follows. One of several proteins that assist in the late maturation steps of the functional core of the 30S ribosomal subunit. Associates with free 30S ribosomal subunits (but not with 30S subunits that are part of 70S ribosomes or polysomes). Required for efficient processing of 16S rRNA. May interact with the 5'-terminal helix region of 16S rRNA. The sequence is that of Ribosome-binding factor A from Salmonella heidelberg (strain SL476).